We begin with the raw amino-acid sequence, 331 residues long: MKGYVVAIFLSSIFLYYVLYCILWGTNGYWFPNEEMKSKNNVKNCFKKPAFASLLRFPQFYPFLCKADFVKVAATYGTNNFLLPYGVKTFESYFRSGLSKLQSCDLVGQFDTVPCKRCVVVGNGGVLKNKTLGAKIDSYDVIIRMNNGPVLGHEEEVGKRTTFRLFYPESVFSDPSHYDPNTTAVLVVFKPQDLRWLMEILIGKKINTDGFWKKPALKLIYKQYQIRILDPYIIREAAFQLLRFPRVFPKDQKPKHPTTGIIALTLAFHICSEVHLAGFKYNFYTPDSPLHYYGNATMSLMKKNAYHNLTAEQLFLKNLIKKKMVINLTQN.

Residues 1-4 lie on the Cytoplasmic side of the membrane; it reads MKGY. A helical; Signal-anchor for type II membrane protein transmembrane segment spans residues 5–25; it reads VVAIFLSSIFLYYVLYCILWG. Topologically, residues 26-331 are lumenal; it reads TNGYWFPNEE…KKMVINLTQN (306 aa). 5 N-linked (GlcNAc...) asparagine glycosylation sites follow: asparagine 129, asparagine 181, asparagine 295, asparagine 308, and asparagine 327.

This sequence belongs to the glycosyltransferase 29 family.

It is found in the golgi apparatus membrane. It catalyses the reaction a neolactoside nLc4Cer(d18:1(4E)) + CMP-N-acetyl-beta-neuraminate = a neolactoside IV(3)-alpha-NeuAc-nLc4Cer(d18:1(4E)) + CMP + H(+). The catalysed reaction is a beta-D-galactosyl-(1-&gt;4)-N-acetyl-beta-D-glucosaminyl derivative + CMP-N-acetyl-beta-neuraminate = an N-acetyl-alpha-neuraminyl-(2-&gt;3)-beta-D-galactosyl-(1-&gt;4)-N-acetyl-beta-D-glucosaminyl derivative + CMP + H(+). It carries out the reaction a neolactoside nLc6Cer(d18:1(4E)) + CMP-N-acetyl-beta-neuraminate = a neolactoside VI(3)-alpha-NeuNAc-nLc6Cer(d18:1(4E)) + CMP + H(+). Functionally, transfers the sialyl residue from CMP-N-acetyl-beta-neuraminate to the terminal galactose residue on sugar chains of glycoproteins and glycolipids. It's alpha-2,3-sialyltransferase activity is specific toward type II glycan chains (Galbeta1-4GlcNAc) on glycoproteins and glycolipids such as neolactosides nLc4Cer and nLc6Cer, whose sialyl-products serve as precursors for the Lewis X antigen. Critically involved in the synthesis of functional selectin ligands needed for neutrophil recruitment during inflammation and lymphocyte homing to the lymph nodes. The chain is Type 2 lactosamine alpha-2,3-sialyltransferase (St3gal6) from Rattus norvegicus (Rat).